A 55-amino-acid chain; its full sequence is Large ribosomal subunit protein bL33 (55 aa).

This sequence belongs to the bacterial ribosomal protein bL33 family.

The polypeptide is Large ribosomal subunit protein bL33 (Buchnera aphidicola subsp. Schizaphis graminum (strain Sg)).